Here is a 266-residue protein sequence, read N- to C-terminus: MSEHSFVWDAVQRVRTGAPLVHNITNYVVMNTTANALLAAGASPVMAHAREEVEELAGLCSSLVLNIGTLSKPWIESMFAAGRIAQSRGVPVVLDPVGAGASSLRTWTSLDLLRELNISVLRGNASEILALSGAGSRTKGVDSIHQAADAADAARELAGKFGCVVVVSGAEDLITDGSSDVLVRGGHDMMPRITGMGCTATALVAAHAAVAGSVLDGAAAGMGVMAVAGTMASRKAKGPGSFQMHFIDALYGMQSFDVEAGVEIVR.

A substrate-binding site is contributed by Met46. 2 residues coordinate ATP: Arg122 and Ser168. Gly195 provides a ligand contact to substrate.

Belongs to the Thz kinase family. Mg(2+) serves as cofactor.

The enzyme catalyses 5-(2-hydroxyethyl)-4-methylthiazole + ATP = 4-methyl-5-(2-phosphooxyethyl)-thiazole + ADP + H(+). The protein operates within cofactor biosynthesis; thiamine diphosphate biosynthesis; 4-methyl-5-(2-phosphoethyl)-thiazole from 5-(2-hydroxyethyl)-4-methylthiazole: step 1/1. Functionally, catalyzes the phosphorylation of the hydroxyl group of 4-methyl-5-beta-hydroxyethylthiazole (THZ). The polypeptide is Hydroxyethylthiazole kinase (Oleidesulfovibrio alaskensis (strain ATCC BAA-1058 / DSM 17464 / G20) (Desulfovibrio alaskensis)).